A 348-amino-acid chain; its full sequence is Zinc finger protein 843 (348 aa).

The segment at 33–55 (CKCKACGRGFTQSASLLQHWRVH) adopts a C2H2-type 1 zinc-finger fold. The segment at 145 to 167 (FCCCSCGDSVNEKTSLSQRVLPH) adopts a C2H2-type 2; degenerate zinc-finger fold. The span at 184-195 (APSSVAPDSTSG) shows a compositional bias: polar residues. Disordered regions lie at residues 184–203 (APSS…GSPG) and 256–329 (ATQP…WRGA).

This chain is Zinc finger protein 843 (ZNF843), found in Homo sapiens (Human).